A 498-amino-acid chain; its full sequence is ATP synthase subunit beta, chloroplastic (498 aa).

Residue 172–179 (GGAGVGKT) coordinates ATP.

It belongs to the ATPase alpha/beta chains family. As to quaternary structure, F-type ATPases have 2 components, CF(1) - the catalytic core - and CF(0) - the membrane proton channel. CF(1) has five subunits: alpha(3), beta(3), gamma(1), delta(1), epsilon(1). CF(0) has four main subunits: a(1), b(1), b'(1) and c(9-12).

The protein localises to the plastid. It localises to the chloroplast thylakoid membrane. It carries out the reaction ATP + H2O + 4 H(+)(in) = ADP + phosphate + 5 H(+)(out). In terms of biological role, produces ATP from ADP in the presence of a proton gradient across the membrane. The catalytic sites are hosted primarily by the beta subunits. The protein is ATP synthase subunit beta, chloroplastic of Citrus sinensis (Sweet orange).